The chain runs to 396 residues: Tryptophan synthase beta chain (396 aa).

An N6-(pyridoxal phosphate)lysine modification is found at Lys-88.

This sequence belongs to the TrpB family. Tetramer of two alpha and two beta chains. Pyridoxal 5'-phosphate is required as a cofactor.

The catalysed reaction is (1S,2R)-1-C-(indol-3-yl)glycerol 3-phosphate + L-serine = D-glyceraldehyde 3-phosphate + L-tryptophan + H2O. It participates in amino-acid biosynthesis; L-tryptophan biosynthesis; L-tryptophan from chorismate: step 5/5. The beta subunit is responsible for the synthesis of L-tryptophan from indole and L-serine. This is Tryptophan synthase beta chain from Actinobacillus pleuropneumoniae serotype 3 (strain JL03).